The chain runs to 230 residues: Broad specificity amino-acid racemase YgeA (230 aa).

Substrate contacts are provided by residues methionine 10, glutamine 52, and 83–85; that span reads TNT. The Proton donor role is filled by threonine 83. Cysteine 197 (proton acceptor) is an active-site residue. A substrate-binding site is contributed by 198–199; sequence TE.

This sequence belongs to the aspartate/glutamate racemases family.

The enzyme catalyses an L-alpha-amino acid = a D-alpha-amino acid. It catalyses the reaction L-homoserine = D-homoserine. In terms of biological role, amino-acid racemase able to utilize a broad range of substrates. Highest activity is observed with L-homoserine and D-homoserine. Has tenfold lower activity against L-methionine, L-leucine, L-valine and L-histidine. Has low activity with L-norvaline, L-asparagine, D-methionine, L-aminobutyric acid, L-isoleucine, L-serine, L-norleucine, L-alanine, L-glutamine, LL-diaminopimelic acid and L-phenylalanine. Has no activity against ten L-amino acids (Thr, Glu, Asp, Arg, Lys, Tyr, Trp, Orn, Cit and Aad). D-amino acids might be used as components of peptidoglycan and/or be involved in peptidoglycan metabolism and remodeling. The chain is Broad specificity amino-acid racemase YgeA (ygeA) from Escherichia coli (strain K12).